Reading from the N-terminus, the 596-residue chain is Cis-3-hydroxy-L-proline dehydratase (596 aa).

The Proton acceptor role is filled by Ser-67.

It belongs to the AcnX family. As to quaternary structure, monomer. Requires Fe(3+) as cofactor.

The enzyme catalyses cis-3-hydroxy-L-proline = 1-pyrroline-2-carboxylate + H2O. Inhibited by Zn(2+). Not inhibited by pyrrole-2-carboxylate nor its derivative 2-thiophenecarboxylate. Its function is as follows. Catalyzes the dehydration of cis-3-hydroxy-L-proline (c3LHyp) to Delta(1)-pyrroline-2-carboxylate (Pyr2C). No activity with L-proline, trans-4-hydroxy-L-proline (t4LHyp), cis-4-hydroxy-L-proline (c4LHyp), trans-3-hydroxy-L-proline (t3LHyp), D-proline, cis-4-hydroxy-D-proline (c4DHyp), trans-4-hydroxy-D-proline (t4DHyp) or L-serine as substrates. Because of the low catalytic efficiency, C3LHyp is likely not a main physiological substrate of this enzyme in H.jecorina. This chain is Cis-3-hydroxy-L-proline dehydratase, found in Hypocrea jecorina (strain QM6a) (Trichoderma reesei).